The following is a 311-amino-acid chain: ATP synthase subunit a (311 aa).

Transmembrane regions (helical) follow at residues 62 to 82 (AVHV…GFFM), 123 to 143 (VAPM…MDLI), 179 to 199 (VTVF…WGFI), 213 to 233 (FWYF…VALI), 253 to 273 (IFIL…LGGI), and 276 to 296 (FGWA…FMVL).

It belongs to the ATPase A chain family. As to quaternary structure, F-type ATPases have 2 components, CF(1) - the catalytic core - and CF(0) - the membrane proton channel. CF(1) has five subunits: alpha(3), beta(3), gamma(1), delta(1), epsilon(1). CF(0) has three main subunits: a(1), b(2) and c(9-12). The alpha and beta chains form an alternating ring which encloses part of the gamma chain. CF(1) is attached to CF(0) by a central stalk formed by the gamma and epsilon chains, while a peripheral stalk is formed by the delta and b chains.

The protein localises to the cell inner membrane. Key component of the proton channel; it plays a direct role in the translocation of protons across the membrane. This chain is ATP synthase subunit a, found in Teredinibacter turnerae (strain ATCC 39867 / T7901).